Consider the following 473-residue polypeptide: Mitochondrial adenyl nucleotide antiporter SLC25A24-A (473 aa).

The tract at residues methionine 1–aspartate 173 is regulatory N-terminal domain. The Mitochondrial intermembrane segment spans residues methionine 1–histidine 197. 4 consecutive EF-hand domains span residues aspartate 19–alanine 54, valine 55–glutamate 88, glutamate 86–asparagine 121, and isoleucine 122–aspartate 157. Residues aspartate 32, asparagine 34, aspartate 36, lysine 38, glutamate 43, aspartate 68, asparagine 70, aspartate 72, histidine 74, glutamate 79, aspartate 99, asparagine 101, aspartate 103, lysine 105, glutamate 110, aspartate 135, aspartate 137, threonine 139, threonine 141, and glutamate 146 each coordinate Ca(2+). The linker region stretch occupies residues isoleucine 159–histidine 168. Residues isoleucine 174–isoleucine 473 are C-terminal transmembrane transporter domain. Solcar repeat units lie at residues glycine 192–leucine 277, leucine 285–tyrosine 370, and proline 382–glutamine 470. Residues leucine 198–leucine 215 traverse the membrane as a helical segment. Over aspartate 216–arginine 251 the chain is Mitochondrial matrix. Residues glycine 252 to tyrosine 271 traverse the membrane as a helical segment. Residues glutamate 272–glycine 294 are Mitochondrial intermembrane-facing. The helical transmembrane segment at serine 295 to methionine 308 threads the bilayer. Topologically, residues glutamate 309–lysine 344 are mitochondrial matrix. A helical membrane pass occupies residues glycine 345–tyrosine 364. At glutamate 365 to leucine 387 the chain is on the mitochondrial intermembrane side. The chain crosses the membrane as a helical span at residues leucine 388–leucine 405. Residues alanine 406–threonine 444 are Mitochondrial matrix-facing. The chain crosses the membrane as a helical span at residues glycine 445 to tyrosine 464. Residues glutamate 465–isoleucine 473 lie on the Mitochondrial intermembrane side of the membrane.

This sequence belongs to the mitochondrial carrier (TC 2.A.29) family. As to quaternary structure, monomer.

It localises to the mitochondrion inner membrane. It catalyses the reaction Mg(2+)(out) + phosphate(in) + ATP(out) = Mg(2+)(in) + phosphate(out) + ATP(in). The enzyme catalyses ADP(out) + phosphate(in) + H(+)(out) = ADP(in) + phosphate(out) + H(+)(in). The catalysed reaction is AMP(out) + phosphate(in) = AMP(in) + phosphate(out). It carries out the reaction phosphate(in) + ATP(out) + 2 H(+)(out) = phosphate(out) + ATP(in) + 2 H(+)(in). It catalyses the reaction dADP(in) + ADP(out) = dADP(out) + ADP(in). The enzyme catalyses Mg(2+)(in) + ADP(out) + ATP(in) + H(+)(out) = Mg(2+)(out) + ADP(in) + ATP(out) + H(+)(in). The catalysed reaction is ADP(out) + diphosphate(in) = ADP(in) + diphosphate(out). It carries out the reaction dAMP(in) + ADP(out) + H(+)(out) = dAMP(out) + ADP(in) + H(+)(in). It catalyses the reaction 3'-AMP(in) + ADP(out) + H(+)(out) = 3'-AMP(out) + ADP(in) + H(+)(in). The enzyme catalyses dAMP(out) + phosphate(in) = dAMP(in) + phosphate(out). The catalysed reaction is 3'-AMP(out) + phosphate(in) = 3'-AMP(in) + phosphate(out). It carries out the reaction dADP(out) + phosphate(in) + H(+)(out) = dADP(in) + phosphate(out) + H(+)(in). With respect to regulation, activated by an increase in cytosolic calcium levels that induce a conformational change of the N-terminal regulatory domain, uncapping the channel and allowing transport. Inhibited by bathophenanthroline, mersalyl, p-hydroxymercuribenzoate, bromcresol purple and tannic acid. Its function is as follows. Electroneutral antiporter that mediates the transport of adenyl nucleotides through the inner mitochondrial membrane. Originally identified as an ATP-magnesium/inorganic phosphate antiporter, it also acts as a broad specificity adenyl nucleotide antiporter. By regulating the mitochondrial matrix adenyl nucleotide pool could adapt to changing cellular energetic demands and indirectly regulate adenyl nucleotide-dependent metabolic pathways. This chain is Mitochondrial adenyl nucleotide antiporter SLC25A24-A (slc25a24-a), found in Xenopus laevis (African clawed frog).